The chain runs to 427 residues: UDP-N-acetylglucosamine 1-carboxyvinyltransferase (427 aa).

Residue lysine 22–asparagine 23 coordinates phosphoenolpyruvate. Position 92 (arginine 92) interacts with UDP-N-acetyl-alpha-D-glucosamine. Aspartate 116 acts as the Proton donor in catalysis. Positions 312 and 334 each coordinate UDP-N-acetyl-alpha-D-glucosamine.

It belongs to the EPSP synthase family. MurA subfamily.

Its subcellular location is the cytoplasm. It catalyses the reaction phosphoenolpyruvate + UDP-N-acetyl-alpha-D-glucosamine = UDP-N-acetyl-3-O-(1-carboxyvinyl)-alpha-D-glucosamine + phosphate. It functions in the pathway cell wall biogenesis; peptidoglycan biosynthesis. In terms of biological role, cell wall formation. Adds enolpyruvyl to UDP-N-acetylglucosamine. The sequence is that of UDP-N-acetylglucosamine 1-carboxyvinyltransferase from Borreliella burgdorferi (strain ATCC 35210 / DSM 4680 / CIP 102532 / B31) (Borrelia burgdorferi).